Here is a 231-residue protein sequence, read N- to C-terminus: Ribose-5-phosphate isomerase A (231 aa).

Residues 28-31, 83-86, and 96-99 each bind substrate; these read TGST, DGAD, and KGGG. Glu-105 (proton acceptor) is an active-site residue. Lys-123 provides a ligand contact to substrate.

Belongs to the ribose 5-phosphate isomerase family. Homodimer.

It catalyses the reaction aldehydo-D-ribose 5-phosphate = D-ribulose 5-phosphate. The protein operates within carbohydrate degradation; pentose phosphate pathway; D-ribose 5-phosphate from D-ribulose 5-phosphate (non-oxidative stage): step 1/1. Functionally, catalyzes the reversible conversion of ribose-5-phosphate to ribulose 5-phosphate. The chain is Ribose-5-phosphate isomerase A from Parvibaculum lavamentivorans (strain DS-1 / DSM 13023 / NCIMB 13966).